Here is a 331-residue protein sequence, read N- to C-terminus: Cytosolic Fe-S cluster assembly factor CFD1 (331 aa).

ATP is bound at residue 25–32 (GKGGVGKS). [4Fe-4S] cluster is bound by residues cysteine 211 and cysteine 214.

Belongs to the Mrp/NBP35 ATP-binding proteins family. NUBP2/CFD1 subfamily. Heterotetramer of 2 NBP35 and 2 CFD1 chains. [4Fe-4S] cluster is required as a cofactor.

The protein localises to the cytoplasm. In terms of biological role, component of the cytosolic iron-sulfur (Fe/S) protein assembly (CIA) machinery. Required for maturation of extramitochondrial Fe-S proteins. The NBP35-CFD1 heterotetramer forms a Fe-S scaffold complex, mediating the de novo assembly of an Fe-S cluster and its transfer to target apoproteins. The polypeptide is Cytosolic Fe-S cluster assembly factor CFD1 (Cryptococcus neoformans var. neoformans serotype D (strain B-3501A) (Filobasidiella neoformans)).